The sequence spans 146 residues: Probable U6 snRNA-associated Sm-like protein LSm4 (146 aa).

In terms of domain architecture, Sm spans leucine 2–valine 75. The segment covering glutamine 80–proline 91 has biased composition (basic and acidic residues). A disordered region spans residues glutamine 80–glycine 146. Residues glycine 137–glycine 146 show a composition bias toward gly residues.

This sequence belongs to the snRNP Sm proteins family. LSm subunits form a heteromer with a doughnut shape.

The protein resides in the nucleus. Binds specifically to the 3'-terminal U-tract of U6 snRNA. The protein is Probable U6 snRNA-associated Sm-like protein LSm4 of Nicotiana tabacum (Common tobacco).